An 85-amino-acid chain; its full sequence is Latartoxin-1a (85 aa).

The signal sequence occupies residues 1-19 (MKVLVFAIVCSVLLQVVLS). Residues 20–25 (ADEEAR) constitute a propeptide, removed in mature form. Positions 22–25 (EEAR) match the Processing quadruplet motif motif. 4 disulfide bridges follow: Cys-27-Cys-42, Cys-34-Cys-47, Cys-41-Cys-64, and Cys-49-Cys-62.

Belongs to the neurotoxin 19 (CSTX) family. Contains 4 disulfide bonds. Post-translationally, cleavage of the propeptide depends on the processing quadruplet motif (XXXR, with at least one of X being E). In terms of tissue distribution, expressed by the venom gland.

It is found in the secreted. Insect toxin. Causes paralysis in larvae of C.vicina by depolarizing membranes at the neuromuscular junction. In Lachesana tarabaevi (Spider), this protein is Latartoxin-1a.